A 619-amino-acid chain; its full sequence is TOX high mobility group box family member 4 (619 aa).

Disordered regions lie at residues 153–227 and 304–337; these read LGLS…QKPV and DMDP…PPAL. T176 is modified (phosphothreonine). S178, S181, and S182 each carry phosphoserine. A compositionally biased stretch (basic and acidic residues) spans 183-193; that stretch reads LHEDGVEEFRR. Positions 208 to 218 are enriched in basic residues; it reads KQKAPKKRKKK. The short motif at 213-218 is the Nuclear localization signal element; sequence KKRKKK. Positions 223-291 form a DNA-binding region, HMG box; sequence PQKPVSAYAL…EYLKALAAYK (69 aa). Positions 307 to 319 are enriched in pro residues; that stretch reads PAPPSQTPSPPPV. Position 313 is a phosphothreonine (T313). A Phosphoserine modification is found at S315. A compositionally biased stretch (low complexity) spans 320 to 337; it reads AAADPASPAPASTEPPAL. R479 bears the Asymmetric dimethylarginine mark. The segment at 507 to 529 is disordered; sequence PPPVESSPEQPVNNSPETHTVEE. Residues 512–524 are compositionally biased toward low complexity; the sequence is SSPEQPVNNSPET. Phosphoserine occurs at positions 548, 550, 558, 560, and 565.

Component of the PNUTS-PP1 phosphatase complex, composed of PPP1R10/PNUTS, TOX4, WDR82 and PPP1CA or PPP1CB or PPP1CC. Interacts with PPP1R10/PNUTS. Interacts with FOXO1 and CREB1 (increased by cAMP); FOXO1 and CREB1 are required for full induction of TOX4-dependent activity and the interactions are inhibited by insulin.

It is found in the nucleus. The protein localises to the chromosome. With respect to regulation, in liver, recruited to target gene promoters following treatment with dexamethasone and cAMP. Binding is decreased in presence of insulin. Transcription factor that modulates cell fate reprogramming from the somatic state to the pluripotent and neuronal fate. In liver, controls the expression of hormone-regulated gluconeogenic genes such as G6PC1 and PCK1. This regulation is independent of the insulin receptor activation. Also acts as a regulatory component of protein phosphatase 1 (PP1) complexes. Component of the PNUTS-PP1 protein phosphatase complex, a PP1 complex that regulates RNA polymerase II transcription pause-release. PNUTS-PP1 also plays a role in the control of chromatin structure and cell cycle progression during the transition from mitosis into interphase. In Bos taurus (Bovine), this protein is TOX high mobility group box family member 4 (TOX4).